A 462-amino-acid chain; its full sequence is Argininosuccinate lyase (462 aa).

Belongs to the lyase 1 family. Argininosuccinate lyase subfamily.

It localises to the cytoplasm. It carries out the reaction 2-(N(omega)-L-arginino)succinate = fumarate + L-arginine. The protein operates within amino-acid biosynthesis; L-arginine biosynthesis; L-arginine from L-ornithine and carbamoyl phosphate: step 3/3. The protein is Argininosuccinate lyase of Bacillus cereus (strain AH820).